A 316-amino-acid chain; its full sequence is Ornithine carbamoyltransferase (316 aa).

Carbamoyl phosphate-binding positions include 57 to 60 (STRT), glutamine 84, arginine 108, and 135 to 138 (HPCQ). L-ornithine is bound by residues asparagine 166, aspartate 230, and 234–235 (SM). Residues 269–270 (CL) and arginine 297 contribute to the carbamoyl phosphate site.

It belongs to the aspartate/ornithine carbamoyltransferase superfamily. OTCase family.

It localises to the cytoplasm. The enzyme catalyses carbamoyl phosphate + L-ornithine = L-citrulline + phosphate + H(+). It functions in the pathway amino-acid degradation; L-arginine degradation via ADI pathway; carbamoyl phosphate from L-arginine: step 2/2. Functionally, reversibly catalyzes the transfer of the carbamoyl group from carbamoyl phosphate (CP) to the N(epsilon) atom of ornithine (ORN) to produce L-citrulline. The chain is Ornithine carbamoyltransferase from Bacillus cereus (strain AH187).